A 284-amino-acid polypeptide reads, in one-letter code: 4-diphosphocytidyl-2-C-methyl-D-erythritol kinase (284 aa).

Lys10 is an active-site residue. 95–105 (PVAAGLGGGSS) provides a ligand contact to ATP. The active site involves Asp137.

Belongs to the GHMP kinase family. IspE subfamily.

The catalysed reaction is 4-CDP-2-C-methyl-D-erythritol + ATP = 4-CDP-2-C-methyl-D-erythritol 2-phosphate + ADP + H(+). Its pathway is isoprenoid biosynthesis; isopentenyl diphosphate biosynthesis via DXP pathway; isopentenyl diphosphate from 1-deoxy-D-xylulose 5-phosphate: step 3/6. In terms of biological role, catalyzes the phosphorylation of the position 2 hydroxy group of 4-diphosphocytidyl-2C-methyl-D-erythritol. The polypeptide is 4-diphosphocytidyl-2-C-methyl-D-erythritol kinase (Levilactobacillus brevis (strain ATCC 367 / BCRC 12310 / CIP 105137 / JCM 1170 / LMG 11437 / NCIMB 947 / NCTC 947) (Lactobacillus brevis)).